The primary structure comprises 439 residues: UPF0489 protein C5orf22 homolog (439 aa).

A disordered region spans residues 163–219; that stretch reads TTKLENGQSGAKIPKAAQTQDDMQSKADTPCTSSSQPPDGSAASGNISETAKKKADD. Residues 179-211 show a composition bias toward polar residues; it reads AQTQDDMQSKADTPCTSSSQPPDGSAASGNISE.

This sequence belongs to the UPF0489 family.

The chain is UPF0489 protein C5orf22 homolog from Danio rerio (Zebrafish).